The primary structure comprises 423 residues: GTPase HflX (423 aa).

The region spanning 202–366 (PAAAIVGYTN…LLETILRNQK (165 aa)) is the Hflx-type G domain. Residues 208-215 (GYTNAGKS), 233-237 (FATLD), 255-258 (DTVG), 321-324 (NKID), and 344-346 (SAK) each bind GTP. 2 residues coordinate Mg(2+): S215 and T235.

This sequence belongs to the TRAFAC class OBG-HflX-like GTPase superfamily. HflX GTPase family. In terms of assembly, monomer. Associates with the 50S ribosomal subunit. Mg(2+) serves as cofactor.

The protein resides in the cytoplasm. Its function is as follows. GTPase that associates with the 50S ribosomal subunit and may have a role during protein synthesis or ribosome biogenesis. This is GTPase HflX from Lacrimispora saccharolytica (strain ATCC 35040 / DSM 2544 / NRCC 2533 / WM1) (Clostridium saccharolyticum).